Reading from the N-terminus, the 316-residue chain is Protein lifeguard 2 (316 aa).

The tract at residues 1–49 is disordered; that stretch reads MTQGKLSVANKAPGTEGQQQANGEKKDAPAVPSAPPSYEEATSGEGLKA. 3 consecutive transmembrane segments (helical) span residues 106–126, 138–158, and 165–185; these read VYTI…LFTF, PGWY…LACC, and FPWN…LTGM. Residue N191 is glycosylated (N-linked (GlcNAc...) asparagine). The next 4 helical transmembrane spans lie at 194 to 214, 225 to 245, 251 to 271, and 290 to 310; these read SVLL…IFSF, GVLF…AILL, PWLH…FLAF, and IFGA…FLQL.

Belongs to the BI1 family. LFG subfamily. Interacts with FAS/TNFRSF6 and BAX. Expressed at high levels on dendrites and to a lesser extent on the soma and axons of neurons in various regions of brain.

Its subcellular location is the cell membrane. The protein localises to the membrane raft. The protein resides in the postsynaptic cell membrane. In terms of biological role, antiapoptotic protein which protects cells uniquely from Fas-induced apoptosis. Regulates Fas-mediated apoptosis in neurons by interfering with caspase-8 activation. Plays a role in cerebellar development by affecting cerebellar size, internal granular layer (IGL) thickness, and Purkinje cell (PC) development. This Rattus norvegicus (Rat) protein is Protein lifeguard 2 (Faim2).